We begin with the raw amino-acid sequence, 301 residues long: Mitochondrial carnitine/acylcarnitine carrier protein (301 aa).

A2 is modified (N-acetylalanine). Over 2-12 (ADQPKPISPLK) the chain is Cytoplasmic. Solcar repeat units follow at residues 8–99 (ISPL…GKKL), 108–196 (LSYP…LKNI), and 207–293 (LSAP…AMKF). The chain crosses the membrane as a helical span at residues 13 to 31 (NLLAGGFGGVCLVFVGHPL). The Mitochondrial matrix segment spans residues 32-73 (DTVKVRLQTQPPSLPGQPPMYSGTFDCFRKTLFREGITGLYR). A helical transmembrane segment spans residues 74–93 (GMAAPIIGVTPMFAVCFFGF). The Cytoplasmic portion of the chain corresponds to 94-112 (GLGKKLQQKHPEDVLSYPQ). The chain crosses the membrane as a helical span at residues 113–131 (LFAAGMLSGVFTTGIMTPG). Residues 132–170 (ERIKCLLQIQASSGESKYTGTLDCAKKLYQEFGIRGIYK) are Mitochondrial matrix-facing. N6-acetyllysine occurs at positions 148 and 157. N6-acetyllysine; alternate is present on K170. K170 carries the post-translational modification N6-succinyllysine; alternate. Residues 171 to 190 (GTVLTLMRDVPASGMYFMTY) form a helical membrane-spanning segment. Residues 191 to 211 (EWLKNIFTPEGKRVSELSAPR) lie on the Cytoplasmic side of the membrane. A helical transmembrane segment spans residues 212–230 (ILVAGGIAGIFNWAVAIPP). Over 231–267 (DVLKSRFQTAPPGKYPNGFRDVLRELIRDEGVTSLYK) the chain is Mitochondrial matrix. Residues 268 to 287 (GFNAVMIRAFPANAACFLGF) form a helical membrane-spanning segment. The Cytoplasmic segment spans residues 288–301 (EVAMKFLNWATPNL).

This sequence belongs to the mitochondrial carrier (TC 2.A.29) family.

Its subcellular location is the mitochondrion inner membrane. The enzyme catalyses O-acetyl-(R)-carnitine(in) + (R)-carnitine(out) = O-acetyl-(R)-carnitine(out) + (R)-carnitine(in). It catalyses the reaction an O-acyl-(R)-carnitine(in) + (R)-carnitine(out) = an O-acyl-(R)-carnitine(out) + (R)-carnitine(in). It carries out the reaction O-propanoyl-(R)-carnitine(in) + (R)-carnitine(out) = O-propanoyl-(R)-carnitine(out) + (R)-carnitine(in). The catalysed reaction is O-hexadecanoyl-(R)-carnitine(in) + (R)-carnitine(out) = O-hexadecanoyl-(R)-carnitine(out) + (R)-carnitine(in). The enzyme catalyses O-octanoyl-(R)-carnitine(in) + (R)-carnitine(out) = O-octanoyl-(R)-carnitine(out) + (R)-carnitine(in). It catalyses the reaction (R)-carnitine(in) = (R)-carnitine(out). Functionally, mediates the electroneutral exchange of acylcarnitines (O-acyl-(R)-carnitine or L-acylcarnitine) of different acyl chain lengths (ranging from O-acetyl-(R)-carnitine to long-chain O-acyl-(R)-carnitines) with free carnitine ((R)-carnitine or L-carnitine) across the mitochondrial inner membrane, via a ping-pong mechanism. Key player in the mitochondrial oxidation pathway, it translocates the fatty acids in the form of acylcarnitines into the mitochondrial matrix, where the carnitine palmitoyltransferase 2 (CPT-2) activates them to undergo fatty acid beta-oxidation. Catalyzes the unidirectional transport (uniport) of carnitine at lower rates than the antiport (exchange). The chain is Mitochondrial carnitine/acylcarnitine carrier protein from Homo sapiens (Human).